Here is a 351-residue protein sequence, read N- to C-terminus: Nicotinate-nucleotide--dimethylbenzimidazole phosphoribosyltransferase (351 aa).

The Proton acceptor role is filled by Glu315.

It belongs to the CobT family.

It catalyses the reaction 5,6-dimethylbenzimidazole + nicotinate beta-D-ribonucleotide = alpha-ribazole 5'-phosphate + nicotinate + H(+). It participates in nucleoside biosynthesis; alpha-ribazole biosynthesis; alpha-ribazole from 5,6-dimethylbenzimidazole: step 1/2. Catalyzes the synthesis of alpha-ribazole-5'-phosphate from nicotinate mononucleotide (NAMN) and 5,6-dimethylbenzimidazole (DMB). In Acetivibrio thermocellus (strain ATCC 27405 / DSM 1237 / JCM 9322 / NBRC 103400 / NCIMB 10682 / NRRL B-4536 / VPI 7372) (Clostridium thermocellum), this protein is Nicotinate-nucleotide--dimethylbenzimidazole phosphoribosyltransferase.